The primary structure comprises 440 residues: Beta-1,3-galactosyl-O-glycosyl-glycoprotein beta-1,6-N-acetylglucosaminyltransferase (440 aa).

At 1 to 12 the chain is on the cytoplasmic side; the sequence is MKMAGWKKKLCR. Residues 13-30 traverse the membrane as a helical; Signal-anchor for type II membrane protein segment; that stretch reads GHHLWALGCYMLLAVVSL. Topologically, residues 31-440 are lumenal; the sequence is RLSLRFKCDV…RHKAIYGTEL (410 aa). 2 N-linked (GlcNAc...) asparagine; by host glycosylation sites follow: Asn-72 and Asn-108. Intrachain disulfides connect Cys-73–Cys-230, Cys-164–Cys-384, Cys-185–Cys-212, and Cys-393–Cys-425.

This sequence belongs to the glycosyltransferase 14 family.

It localises to the host Golgi apparatus membrane. It catalyses the reaction a 3-O-[beta-D-galactosyl-(1-&gt;3)-N-acetyl-alpha-D-galactosaminyl]-L-seryl-[protein] + UDP-N-acetyl-alpha-D-glucosamine = 3-O-{beta-D-galactosyl-(1-&gt;3)-[N-acetyl-beta-D-glucosaminyl-(1-&gt;6)]-N-acetyl-alpha-D-galactosaminyl}-L-seryl-[protein] + UDP + H(+). The catalysed reaction is a 3-O-[beta-D-galactosyl-(1-&gt;3)-N-acetyl-alpha-D-galactosaminyl]-L-threonyl-[protein] + UDP-N-acetyl-alpha-D-glucosamine = a 3-O-{beta-D-galactosyl-(1-&gt;3)-[N-acetyl-beta-D-glucosaminyl-(1-&gt;6)]-N-acetyl-alpha-D-galactosaminyl}-L-threonyl-[protein] + UDP + H(+). It carries out the reaction a beta-D-Gal-(1-&gt;4)-beta-D-GlcNAc-(1-&gt;3)-beta-D-Gal-(1-&gt;4)-beta-D-GlcNAc derivative + UDP-N-acetyl-alpha-D-glucosamine = a beta-D-Gal-(1-&gt;4)-beta-D-GlcNAc-(1-&gt;3)-[beta-D-GlcNAc-(1-&gt;6)]-beta-D-Gal-(1-&gt;4)-N-acetyl-beta-D-glucosaminyl derivative + UDP + H(+). The enzyme catalyses 3-O-[N-acetyl-beta-D-glucosaminyl-(1-&gt;3)-N-acetyl-alpha-D-galactosaminyl]-L-seryl-[protein] + UDP-N-acetyl-alpha-D-glucosamine = 3-O-[N-acetyl-beta-D-glucosaminyl-(1-&gt;3)-[N-acetyl-beta-D-glucosaminyl-(1-&gt;6)]-N-acetyl-alpha-D-galactosaminyl]-L-seryl-[protein] + UDP + H(+). It catalyses the reaction a 3-O-[N-acetyl-beta-D-glucosaminyl-(1-&gt;3)-N-acetyl-alpha-D-galactosaminyl]-L-threonyl-[protein] + UDP-N-acetyl-alpha-D-glucosamine = 3-O-[N-acetyl-beta-D-glucosaminyl-(1-&gt;3)-[N-acetyl-beta-D-glucosaminyl-(1-&gt;6)]-N-acetyl-alpha-D-galactosaminyl]-L-threonyl-[protein] + UDP + H(+). It functions in the pathway protein modification; protein glycosylation. Non-essential glycosyltransferase that can synthesize all known mucin beta 6 N-acetylglucosaminides. Mediates core 2 and core 4 O-glycan branching, 2 important steps in mucin-type biosynthesis. Has also I-branching enzyme activity by converting linear into branched poly-N-acetyllactosaminoglycans. Contributes to the post-translational modifications of structural proteins. This chain is Beta-1,3-galactosyl-O-glycosyl-glycoprotein beta-1,6-N-acetylglucosaminyltransferase (Bo17), found in Bos taurus (Bovine).